Here is a 208-residue protein sequence, read N- to C-terminus: FMN-dependent NADH:quinone oxidoreductase (208 aa).

FMN-binding positions include 17 to 19, 99 to 102, and 143 to 146; these read SNS, MWNL, and SRGG.

The protein belongs to the azoreductase type 1 family. As to quaternary structure, homodimer. It depends on FMN as a cofactor.

It catalyses the reaction 2 a quinone + NADH + H(+) = 2 a 1,4-benzosemiquinone + NAD(+). The enzyme catalyses N,N-dimethyl-1,4-phenylenediamine + anthranilate + 2 NAD(+) = 2-(4-dimethylaminophenyl)diazenylbenzoate + 2 NADH + 2 H(+). Functionally, quinone reductase that provides resistance to thiol-specific stress caused by electrophilic quinones. Its function is as follows. Also exhibits azoreductase activity. Catalyzes the reductive cleavage of the azo bond in aromatic azo compounds to the corresponding amines. This chain is FMN-dependent NADH:quinone oxidoreductase, found in Staphylococcus carnosus (strain TM300).